The following is a 558-amino-acid chain: Glucose-6-phosphate isomerase (558 aa).

The residue at position 2 (Ala-2) is an N-acetylalanine. Residue Lys-12 is modified to N6-acetyllysine. Residue Lys-34 is modified to N6-(2-hydroxyisobutyryl)lysine. Residue Ser-107 is modified to Phosphoserine. Phosphothreonine is present on Thr-109. Lys-142 is subject to N6-acetyllysine. 159–160 (GS) lines the D-glucose 6-phosphate pocket. Residue Ser-185 is modified to Phosphoserine; by CK2. 210–215 (SKTFTT) lines the D-glucose 6-phosphate pocket. Residue Thr-250 is modified to Phosphothreonine. Gln-354, Glu-358, and His-389 together coordinate D-glucose 6-phosphate. Glu-358 serves as the catalytic Proton donor. His-389 is an active-site residue. Residue Lys-454 is modified to N6-acetyllysine; alternate. Lys-454 is subject to N6-malonyllysine; alternate. An N6-succinyllysine; alternate modification is found at Lys-454. Phosphoserine is present on Ser-455. Position 519 (Lys-519) interacts with D-glucose 6-phosphate. Residue Lys-519 is part of the active site.

It belongs to the GPI family. Homodimer; in the catalytically active form. Monomer in the secreted form. In terms of processing, phosphorylation at Ser-185 by CK2 has been shown to decrease enzymatic activity and may contribute to secretion by a non-classical secretory pathway. Post-translationally, ISGylated.

The protein localises to the cytoplasm. The protein resides in the secreted. It catalyses the reaction alpha-D-glucose 6-phosphate = beta-D-fructose 6-phosphate. It participates in carbohydrate degradation; glycolysis; D-glyceraldehyde 3-phosphate and glycerone phosphate from D-glucose: step 2/4. Functionally, in the cytoplasm, catalyzes the conversion of glucose-6-phosphate to fructose-6-phosphate, the second step in glycolysis, and the reverse reaction during gluconeogenesis. Besides it's role as a glycolytic enzyme, also acts as a secreted cytokine: acts as an angiogenic factor (AMF) that stimulates endothelial cell motility. Acts as a neurotrophic factor, neuroleukin, for spinal and sensory neurons. It is secreted by lectin-stimulated T-cells and induces immunoglobulin secretion. The polypeptide is Glucose-6-phosphate isomerase (Macaca fascicularis (Crab-eating macaque)).